We begin with the raw amino-acid sequence, 214 residues long: Redox-sensing transcriptional repressor Rex (214 aa).

A DNA-binding region (H-T-H motif) is located at residues 18–57 (LYYRLVNQLHEKGIDRVNSKTISEALDIDSASIRRDFSYF). 92–97 (GVGNLG) is an NAD(+) binding site.

It belongs to the transcriptional regulatory Rex family. Homodimer.

It localises to the cytoplasm. Modulates transcription in response to changes in cellular NADH/NAD(+) redox state. This is Redox-sensing transcriptional repressor Rex from Staphylococcus carnosus (strain TM300).